A 93-amino-acid chain; its full sequence is Small ribosomal subunit protein uS19c (93 aa).

The protein belongs to the universal ribosomal protein uS19 family.

It localises to the plastid. It is found in the chloroplast. In terms of biological role, protein S19 forms a complex with S13 that binds strongly to the 16S ribosomal RNA. This chain is Small ribosomal subunit protein uS19c, found in Lolium perenne (Perennial ryegrass).